A 238-amino-acid polypeptide reads, in one-letter code: 15,16-dihydrobiliverdin:ferredoxin oxidoreductase (238 aa).

It belongs to the HY2 family.

The catalysed reaction is 15,16-dihydrobiliverdin + oxidized 2[4Fe-4S]-[ferredoxin] = biliverdin IXalpha + reduced 2[4Fe-4S]-[ferredoxin] + 2 H(+). In terms of biological role, catalyzes the two-electron reduction of biliverdin IX-alpha at the C15 methine bridge. This is 15,16-dihydrobiliverdin:ferredoxin oxidoreductase from Prochlorococcus marinus (strain MIT 9211).